The chain runs to 112 residues: Cortistatin (112 aa).

Positions 1–27 are cleaved as a signal peptide; the sequence is MGGCSTRGKRPSALSLLLLLLLSGIAA. Positions 28 to 81 are excised as a propeptide; sequence SALPLESGPTGQDSVQDATGGRRTGLLTFLAWWHEWASQDSSSTAFEGGTPELS. The tract at residues 66 to 101 is disordered; sequence QDSSSTAFEGGTPELSKRQERPPLQQPPHRDKKPCK. A disulfide bond links Cys-100 and Cys-111.

This sequence belongs to the somatostatin family. In terms of tissue distribution, interneurons in the cerebral cortex and hippocampus.

It localises to the secreted. Functionally, neuropeptide with neuronal depressant and sleep-modulating properties. The protein is Cortistatin (Cort) of Rattus norvegicus (Rat).